We begin with the raw amino-acid sequence, 334 residues long: Isopentenyl-diphosphate delta-isomerase (334 aa).

5-6 (RK) provides a ligand contact to substrate. Residues 60-62 (AMT), Ser-90, and Asn-117 each bind FMN. Gln-147 is a substrate binding site. A Mg(2+)-binding site is contributed by Glu-148. Residues Lys-179, Ser-204, Thr-209, 253 to 255 (GVR), and 274 to 275 (SR) contribute to the FMN site.

This sequence belongs to the IPP isomerase type 2 family. Homooctamer. Dimer of tetramers. The cofactor is FMN. Requires NADPH as cofactor. Mg(2+) is required as a cofactor.

The protein localises to the cytoplasm. The enzyme catalyses isopentenyl diphosphate = dimethylallyl diphosphate. Its function is as follows. Involved in the biosynthesis of isoprenoids. Catalyzes the 1,3-allylic rearrangement of the homoallylic substrate isopentenyl (IPP) to its allylic isomer, dimethylallyl diphosphate (DMAPP). The polypeptide is Isopentenyl-diphosphate delta-isomerase (Streptococcus gordonii (strain Challis / ATCC 35105 / BCRC 15272 / CH1 / DL1 / V288)).